Consider the following 312-residue polypeptide: MELIILVGIATALLVVIITLYLLQKKNAAPETKPAAALQRGVPQRVQEGVPRRAQIARNQRNRLRQNAPAAPAGQVAPAAGPPAAPGDSDHENEGQVDDDDARVPQGAVLDEKMGAKKRAKMEAKEQKRLQREQELHDREQRKVKEAKEEAERKHQEDLEAEVERKRVEAERLAKEERERKEHEEYLKMKAAFSVEEEGFEEGDADEQDSLLADFIQYIRDNKVVVLEDLAVAFKLKTQQVIDRIQELQADGTLTGVIDDRGKFIYVSEEELSAVAKFIKQRGRVSIAELAESSNNLINLTPISAGGEEASS.

The Lumenal segment spans residues 1 to 2 (ME). A helical membrane pass occupies residues 3–23 (LIILVGIATALLVVIITLYLL). The Cytoplasmic portion of the chain corresponds to 24-312 (QKKNAAPETK…ISAGGEEASS (289 aa)). The segment covering 59-79 (NQRNRLRQNAPAAPAGQVAPA) has biased composition (low complexity). The segment at 59–162 (NQRNRLRQNA…RKHQEDLEAE (104 aa)) is disordered. Basic and acidic residues predominate over residues 110 to 162 (LDEKMGAKKRAKMEAKEQKRLQREQELHDREQRKVKEAKEEAERKHQEDLEAE).

Belongs to the DDRGK1 family. In terms of assembly, interacts with Atg9; the interaction is transient.

It localises to the endoplasmic reticulum membrane. Its function is as follows. Substrate adapter for ufmylation, the covalent attachment of the ubiquitin-like modifier UFM1 to substrate proteins. Required for ufmylation of Atg9; protects the nervous system during aging, possibly by stabilizing Atg9 and supporting its function. This Drosophila yakuba (Fruit fly) protein is DDRGK domain-containing protein 1.